A 302-amino-acid chain; its full sequence is Zygote arrest protein 2.S (302 aa).

3 disordered regions span residues 15 to 46 (YGGN…SEPP), 88 to 117 (VDTG…PTDC), and 138 to 195 (LPQG…EPNK). The segment covering 159–178 (LKDRGPSPEEKEPETKEALE) has biased composition (basic and acidic residues). The segment at 203 to 288 (QKYGYFHCKD…QELCGRCKNK (86 aa)) adopts a 3CxxC-type zinc-finger fold.

This sequence belongs to the ZAR1 family. As to expression, oocyte-specific.

The protein localises to the cytoplasm. It is found in the cytoplasmic ribonucleoprotein granule. MRNA-binding protein required for maternal mRNA storage, translation and degradation during oocyte maturation. Probably promotes formation of some phase-separated membraneless compartment that stores maternal mRNAs in oocytes: acts by undergoing liquid-liquid phase separation upon binding to maternal mRNAs. Binds to the 3'-UTR of maternal mRNAs, inhibiting their translation. The polypeptide is Zygote arrest protein 2.S (Xenopus laevis (African clawed frog)).